The chain runs to 420 residues: MNYKRIKGTNDIFGEEIWYWRYVEETFRNVCESAGIEEIRTPIFEQTELFVRSVGEESDIVQKEMYTFQDKAGRSITLRPEGTAPVVRAFLENSLIDRGFQQRYYYIGPMFRYEKPQSGRLRQFHQVGFEIIGSESPKADFEVIMLVDTFLRKLGLTKYRIHLNSIGCSACRKNYREALKEYYGQILANLCDDCKRRYETNILRLLDCKVDHEYALNAPKSVDYLCDSCKTHYEKLKEYLNTFEIEYVEDHTLVRGLDYYTRTVFEVRHEGLGAQNTIAGGGRYDGLFVELGGSSVPALGFAGGIERIILALKAEEIEIPIKNVHLVYVVTLGEKAFADGVQLAVELRKKGLSVDVDIMDRKLSGQLKHAHRMGSRYAVIIGDEELEKGIVILRDLETGDQVEVDRDFAVDYIAERVSKD.

Belongs to the class-II aminoacyl-tRNA synthetase family. Homodimer.

The protein localises to the cytoplasm. It carries out the reaction tRNA(His) + L-histidine + ATP = L-histidyl-tRNA(His) + AMP + diphosphate + H(+). The sequence is that of Histidine--tRNA ligase from Thermotoga petrophila (strain ATCC BAA-488 / DSM 13995 / JCM 10881 / RKU-1).